A 123-amino-acid polypeptide reads, in one-letter code: Small ribosomal subunit protein uS12 (123 aa).

A disordered region spans residues 1–22 (MATINQLVRQPRKRSVEKSDVP). 3-methylthioaspartic acid is present on aspartate 89. A disordered region spans residues 100-123 (GSLDTSGVKGRNQGRSKYGTKRPK). Over residues 111 to 123 (NQGRSKYGTKRPK) the composition is skewed to basic residues.

This sequence belongs to the universal ribosomal protein uS12 family. Part of the 30S ribosomal subunit. Contacts proteins S8 and S17. May interact with IF1 in the 30S initiation complex.

In terms of biological role, with S4 and S5 plays an important role in translational accuracy. Its function is as follows. Interacts with and stabilizes bases of the 16S rRNA that are involved in tRNA selection in the A site and with the mRNA backbone. Located at the interface of the 30S and 50S subunits, it traverses the body of the 30S subunit contacting proteins on the other side and probably holding the rRNA structure together. The combined cluster of proteins S8, S12 and S17 appears to hold together the shoulder and platform of the 30S subunit. The sequence is that of Small ribosomal subunit protein uS12 from Pseudomonas entomophila (strain L48).